The sequence spans 377 residues: MKEIARHCTFSPMKIKEKKGYFISFSALFLIAYMFVAAVPLGADPYFLPIWARDLASELHXERPERAVRVNADTVQTLQPFMVGEYFGYFTDZGSVVFATRVTQRLSASTHAWAVYPEHAVRTPVFNPAGEHLAEIAEPGFVHIEADRFFLFSPGGNAVSSYDARGVQRWRVLHTAPITAFHSSAAGAVIGFSDGKVMVVRADGTVRCAFYPGGSTYEIVFGVTLSADGTLAACVCGLDRQRVILVSLADVQCKIVHHQYLEGALRHQLLMNFDTEGRYVVFEHAQGVGVIDCQRLETNIIPLVGDVVGMGVQPECDVVTVLSQKEQRCRFAVFERAVHRVGDVRFDAQDVSLTQGEKKFFLSIDMLLARIDIAGIP.

A helical transmembrane segment spans residues tyrosine 21–alanine 43.

Its subcellular location is the membrane. This is an uncharacterized protein from Treponema pallidum (strain Nichols).